A 236-amino-acid chain; its full sequence is Eukaryotic translation initiation factor 3 subunit K (236 aa).

The PCI domain maps to 42-222 (YDKDILVTTL…TIKSRNIEEK (181 aa)).

It belongs to the eIF-3 subunit K family. In terms of assembly, component of the eukaryotic translation initiation factor 3 (eIF-3) complex.

It localises to the cytoplasm. Component of the eukaryotic translation initiation factor 3 (eIF-3) complex, which is involved in protein synthesis of a specialized repertoire of mRNAs and, together with other initiation factors, stimulates binding of mRNA and methionyl-tRNAi to the 40S ribosome. The eIF-3 complex specifically targets and initiates translation of a subset of mRNAs involved in cell proliferation. This Brugia malayi (Filarial nematode worm) protein is Eukaryotic translation initiation factor 3 subunit K.